Here is a 36-residue protein sequence, read N- to C-terminus: Trypsin inhibitor 2 (36 aa).

3 disulfide bridges follow: cysteine 3/cysteine 20, cysteine 10/cysteine 24, and cysteine 19/cysteine 35.

Trypsin inhibitor. The polypeptide is Trypsin inhibitor 2 (Spinacia oleracea (Spinach)).